Here is a 796-residue protein sequence, read N- to C-terminus: Conidiophore development regulator abaA (796 aa).

The TEA DNA-binding region spans 133–207 (GKDGEPVWSD…QVLDSFLKGD (75 aa)). Residues 215 to 254 (REQSDRSTAQTQPVGPRWRTSMDHLPSSHYGTHATSSYPE) are disordered. Over residues 243–252 (HYGTHATSSY) the composition is skewed to polar residues. The segment at 341–362 (LSDVNDPLNCEIILLETNLELM) is leucine-zipper-like. Residues 612–643 (EGLSDKTAPTSVLDPFPNLTQQTTSQTAGINV) are disordered. The span at 629 to 643 (NLTQQTTSQTAGINV) shows a compositional bias: polar residues.

Belongs to the TEC1 family.

It localises to the nucleus. In terms of biological role, brlA, abaA and wetA are pivotal regulators of conidiophore development and conidium maturation. They act individually and together to regulate their own expression and that of numerous other sporulation-specific gene. Controls temporal and spatial specificity in Aspergillus development. Directs the differentiation of phialides and is continuously required for maintenance of their function. Expression of abaA leads to activation of brlA and wetA, cessation of vegetative growth, and accentuated cellular vacuolization. Binds to the sequence 5'-CATTCY-3', where Y is a pyrimidine, making both major- and minor-groove contacts. Multiple abaA binding sites are present in the cis-acting regulatory regions of several developmentally controlled structural genes as well as those of the upstream regulatory gene brlA, the downstream regulatory gene wetA, and abaA itself. The protein is Conidiophore development regulator abaA of Emericella nidulans (strain FGSC A4 / ATCC 38163 / CBS 112.46 / NRRL 194 / M139) (Aspergillus nidulans).